Reading from the N-terminus, the 241-residue chain is 3-oxoacyl-[acyl-carrier-protein] reductase FabG (241 aa).

Residues G13–S16, S38, E57–V58, and N83 each bind NADP(+). S135 contributes to the substrate binding site. The active-site Proton acceptor is the Y148. NADP(+)-binding positions include Y148–K152 and I181.

Belongs to the short-chain dehydrogenases/reductases (SDR) family. In terms of assembly, homotetramer.

The enzyme catalyses a (3R)-hydroxyacyl-[ACP] + NADP(+) = a 3-oxoacyl-[ACP] + NADPH + H(+). The protein operates within lipid metabolism; fatty acid biosynthesis. Its function is as follows. Catalyzes the NADPH-dependent reduction of beta-ketoacyl-ACP substrates to beta-hydroxyacyl-ACP products, the first reductive step in the elongation cycle of fatty acid biosynthesis. In Rickettsia prowazekii (strain Madrid E), this protein is 3-oxoacyl-[acyl-carrier-protein] reductase FabG (fabG).